Here is a 404-residue protein sequence, read N- to C-terminus: Type II restriction enzyme EcoRII (404 aa).

Residue Tyr308 is part of the active site.

As to quaternary structure, homodimer. The cofactor is Mg(2+).

The enzyme catalyses Endonucleolytic cleavage of DNA to give specific double-stranded fragments with terminal 5'-phosphates.. Its function is as follows. An E and P subtype restriction enzyme that recognizes the double-stranded sequence 5'-CCWGG-3' and cleaves before C-1. In Escherichia coli, this protein is Type II restriction enzyme EcoRII (ecoRIIR).